We begin with the raw amino-acid sequence, 228 residues long: Glucose-induced degradation protein 8-A homolog (228 aa).

Residues 25–57 (QRADMNRLIMNYLVTEGFKEAAEKFRMESGIEP) form the LisH domain. A CTLH domain is found at 63-120 (SLDERIKIREMVLKGQIQEAIALINSLHPELLDTNRYLYFHLQQQHLIELIRLRETEA).

Belongs to the GID8 family. In terms of assembly, identified in the CTLH complex that contains at least MAEA, RMND5A (or alternatively its paralog RMND5B), GID8, WDR26, and RANBP9 and/or RANBP10. Interacts with CTNNB1.

In terms of biological role, core component of the CTLH E3 ubiquitin-protein ligase complex that selectively accepts ubiquitin from UBE2H and mediates ubiquitination and subsequent proteasomal degradation of target proteins. Acts as a positive regulator of Wnt signaling pathway by promoting beta-catenin (CTNNB1) nuclear accumulation. Required for normal Wnt signaling and normal dorsoventral patterning during embryogenesis. This Danio rerio (Zebrafish) protein is Glucose-induced degradation protein 8-A homolog (gid8a).